The primary structure comprises 285 residues: Ribosomal RNA small subunit methyltransferase H (285 aa).

Residues 34–36 (AGH), Asp51, Phe75, Asp96, and His103 contribute to the S-adenosyl-L-methionine site. The interval 259–285 (LVPSEKEAAQNPRARSAKLRAAEKEAP) is disordered.

It belongs to the methyltransferase superfamily. RsmH family.

Its subcellular location is the cytoplasm. It catalyses the reaction cytidine(1402) in 16S rRNA + S-adenosyl-L-methionine = N(4)-methylcytidine(1402) in 16S rRNA + S-adenosyl-L-homocysteine + H(+). In terms of biological role, specifically methylates the N4 position of cytidine in position 1402 (C1402) of 16S rRNA. The sequence is that of Ribosomal RNA small subunit methyltransferase H from Thermus thermophilus (strain ATCC 27634 / DSM 579 / HB8).